We begin with the raw amino-acid sequence, 1394 residues long: DNA-directed RNA polymerase subunit beta' (1394 aa).

Residues Cys70, Cys72, Cys85, and Cys88 each contribute to the Zn(2+) site. Mg(2+)-binding residues include Asp470, Asp472, and Asp474. Zn(2+)-binding residues include Cys815, Cys889, Cys896, and Cys899.

It belongs to the RNA polymerase beta' chain family. In terms of assembly, the RNAP catalytic core consists of 2 alpha, 1 beta, 1 beta' and 1 omega subunit. When a sigma factor is associated with the core the holoenzyme is formed, which can initiate transcription. Requires Mg(2+) as cofactor. Zn(2+) is required as a cofactor.

The catalysed reaction is RNA(n) + a ribonucleoside 5'-triphosphate = RNA(n+1) + diphosphate. DNA-dependent RNA polymerase catalyzes the transcription of DNA into RNA using the four ribonucleoside triphosphates as substrates. This is DNA-directed RNA polymerase subunit beta' from Anaeromyxobacter dehalogenans (strain 2CP-C).